The primary structure comprises 100 residues: Urease subunit gamma (100 aa).

Belongs to the urease gamma subunit family. Heterotrimer of UreA (gamma), UreB (beta) and UreC (alpha) subunits. Three heterotrimers associate to form the active enzyme.

The protein localises to the cytoplasm. It catalyses the reaction urea + 2 H2O + H(+) = hydrogencarbonate + 2 NH4(+). Its pathway is nitrogen metabolism; urea degradation; CO(2) and NH(3) from urea (urease route): step 1/1. This Prochlorococcus marinus (strain MIT 9312) protein is Urease subunit gamma.